The following is a 420-amino-acid chain: Dual-specificity RNA methyltransferase RlmN (420 aa).

Catalysis depends on Glu115, which acts as the Proton acceptor. The Radical SAM core domain maps to 121–388; the sequence is DADRGTLCVS…APIRTPRGRD (268 aa). Residues Cys128 and Cys393 are joined by a disulfide bond. [4Fe-4S] cluster-binding residues include Cys135, Cys139, and Cys142. S-adenosyl-L-methionine-binding positions include 217 to 218, Ser249, 271 to 273, and Asn350; these read GE and SLH. Cys393 serves as the catalytic S-methylcysteine intermediate.

This sequence belongs to the radical SAM superfamily. RlmN family. The cofactor is [4Fe-4S] cluster.

The protein localises to the cytoplasm. It carries out the reaction adenosine(2503) in 23S rRNA + 2 reduced [2Fe-2S]-[ferredoxin] + 2 S-adenosyl-L-methionine = 2-methyladenosine(2503) in 23S rRNA + 5'-deoxyadenosine + L-methionine + 2 oxidized [2Fe-2S]-[ferredoxin] + S-adenosyl-L-homocysteine. The catalysed reaction is adenosine(37) in tRNA + 2 reduced [2Fe-2S]-[ferredoxin] + 2 S-adenosyl-L-methionine = 2-methyladenosine(37) in tRNA + 5'-deoxyadenosine + L-methionine + 2 oxidized [2Fe-2S]-[ferredoxin] + S-adenosyl-L-homocysteine. In terms of biological role, specifically methylates position 2 of adenine 2503 in 23S rRNA and position 2 of adenine 37 in tRNAs. m2A2503 modification seems to play a crucial role in the proofreading step occurring at the peptidyl transferase center and thus would serve to optimize ribosomal fidelity. This is Dual-specificity RNA methyltransferase RlmN from Sphingopyxis alaskensis (strain DSM 13593 / LMG 18877 / RB2256) (Sphingomonas alaskensis).